Consider the following 888-residue polypeptide: Endochitinase A1 (888 aa).

The signal sequence occupies residues methionine 1–alanine 22. A GH18 domain is found at serine 29–cysteine 338. Glutamate 174 serves as the catalytic Proton donor. Disordered regions lie at residues cysteine 338–alanine 631, proline 743–serine 799, and proline 813–glutamate 855. Residues valine 344 to glycine 617 show a composition bias toward low complexity. A glycan (N-linked (GlcNAc...) asparagine) is linked at asparagine 622. A compositionally biased stretch (polar residues) spans glutamate 764–serine 775. Asparagine 780 carries an N-linked (GlcNAc...) asparagine glycan. Residues proline 835 to glutamate 855 are compositionally biased toward polar residues. Glycine 863 carries the GPI-anchor amidated glycine lipid modification. Residues alanine 864–leucine 888 constitute a propeptide, removed in mature form.

The protein belongs to the glycosyl hydrolase 18 family. Chitinase class III subfamily.

It is found in the cell membrane. Its subcellular location is the secreted. It localises to the cell wall. The catalysed reaction is Random endo-hydrolysis of N-acetyl-beta-D-glucosaminide (1-&gt;4)-beta-linkages in chitin and chitodextrins.. The cyclic peptide natural product argifin acts as a specific inhibitor. Its function is as follows. GPI-anchored chitinase involved in the degradation of chitin, a component of the cell walls of fungi and exoskeletal elements of some animals (including worms and arthropods). Required to reshape the cell wall at the sites where cell wall remodeling and/or cell wall maturation actively take place such as sites of conidia formation. The polypeptide is Endochitinase A1 (chiA1) (Aspergillus fumigatus (strain ATCC MYA-4609 / CBS 101355 / FGSC A1100 / Af293) (Neosartorya fumigata)).